Here is a 289-residue protein sequence, read N- to C-terminus: Protease HtpX (289 aa).

2 helical membrane passes run 6–26 (ILFL…LNII) and 38–58 (TGIL…SLFM). H144 contributes to the Zn(2+) binding site. E145 is a catalytic residue. H148 lines the Zn(2+) pocket. The next 2 helical transmembrane spans lie at 152 to 172 (GDMV…IFLS) and 194 to 214 (LVFW…ATMI). A Zn(2+)-binding site is contributed by E223.

This sequence belongs to the peptidase M48B family. It depends on Zn(2+) as a cofactor.

The protein resides in the cell inner membrane. This Haemophilus ducreyi (strain 35000HP / ATCC 700724) protein is Protease HtpX.